The primary structure comprises 709 residues: Phosphoribosylformylglycinamidine synthase subunit PurL (709 aa).

Residue His36 is part of the active site. ATP is bound by residues Tyr39 and Lys80. Glu82 serves as a coordination point for Mg(2+). Substrate-binding positions include 83-86 (SHNH) and Arg105. The active-site Proton acceptor is His84. Asp106 contacts Mg(2+). Gln226 is a binding site for substrate. Asp252 is a binding site for Mg(2+). A substrate-binding site is contributed by 294 to 296 (ETQ). Positions 470 and 507 each coordinate ATP. Ser510 serves as a coordination point for substrate.

Belongs to the FGAMS family. Monomer. Part of the FGAM synthase complex composed of 1 PurL, 1 PurQ and 2 PurS subunits.

It localises to the cytoplasm. The catalysed reaction is N(2)-formyl-N(1)-(5-phospho-beta-D-ribosyl)glycinamide + L-glutamine + ATP + H2O = 2-formamido-N(1)-(5-O-phospho-beta-D-ribosyl)acetamidine + L-glutamate + ADP + phosphate + H(+). The protein operates within purine metabolism; IMP biosynthesis via de novo pathway; 5-amino-1-(5-phospho-D-ribosyl)imidazole from N(2)-formyl-N(1)-(5-phospho-D-ribosyl)glycinamide: step 1/2. Part of the phosphoribosylformylglycinamidine synthase complex involved in the purines biosynthetic pathway. Catalyzes the ATP-dependent conversion of formylglycinamide ribonucleotide (FGAR) and glutamine to yield formylglycinamidine ribonucleotide (FGAM) and glutamate. The FGAM synthase complex is composed of three subunits. PurQ produces an ammonia molecule by converting glutamine to glutamate. PurL transfers the ammonia molecule to FGAR to form FGAM in an ATP-dependent manner. PurS interacts with PurQ and PurL and is thought to assist in the transfer of the ammonia molecule from PurQ to PurL. The polypeptide is Phosphoribosylformylglycinamidine synthase subunit PurL (Saccharolobus islandicus (strain Y.N.15.51 / Yellowstone #2) (Sulfolobus islandicus)).